A 200-amino-acid polypeptide reads, in one-letter code: NAD(P)H dehydrogenase (quinone) (200 aa).

In terms of domain architecture, Flavodoxin-like spans 4–191 (VLVLYYSMYG…DIARFQGKHV (188 aa)). FMN is bound by residues 10 to 15 (SMYGHI) and 79 to 81 (TRF). An NAD(+)-binding site is contributed by Y12. Substrate is bound at residue W99. Residues 114–120 (STGTQHG) and H135 each bind FMN.

Belongs to the WrbA family. The cofactor is FMN.

It catalyses the reaction a quinone + NADH + H(+) = a quinol + NAD(+). It carries out the reaction a quinone + NADPH + H(+) = a quinol + NADP(+). The chain is NAD(P)H dehydrogenase (quinone) from Paraburkholderia phytofirmans (strain DSM 17436 / LMG 22146 / PsJN) (Burkholderia phytofirmans).